Here is a 932-residue protein sequence, read N- to C-terminus: GPI ethanolamine phosphate transferase 1 (932 aa).

Residues Met1–Leu8 lie on the Cytoplasmic side of the membrane. The chain crosses the membrane as a helical span at residues Val9–Phe29. At Val30–Leu456 the chain is on the lumenal side. N-linked (GlcNAc...) asparagine glycans are attached at residues Asn138, Asn202, and Asn360. Residues Val457 to Val477 traverse the membrane as a helical segment. The Cytoplasmic segment spans residues Val478 to Thr486. A helical membrane pass occupies residues Ser487 to Phe507. Residues Gln508–Lys509 lie on the Lumenal side of the membrane. A helical membrane pass occupies residues Ser510–Gln530. At Arg531–Pro551 the chain is on the cytoplasmic side. Residues Ala552 to Gly572 form a helical membrane-spanning segment. Topologically, residues Tyr573–Glu577 are lumenal. The chain crosses the membrane as a helical span at residues Ile578–Ala598. The Cytoplasmic portion of the chain corresponds to Lys599 to Pro603. Residues Thr604–Val624 form a helical membrane-spanning segment. The Lumenal segment spans residues Lys625 to Glu627. Residues Ser628–Ile648 traverse the membrane as a helical segment. The Cytoplasmic portion of the chain corresponds to His649–Lys653. Residues Leu654 to Thr674 traverse the membrane as a helical segment. Over Met675–Gln696 the chain is Lumenal. Residues Val697–Ser717 form a helical membrane-spanning segment. At Asp718–Phe737 the chain is on the cytoplasmic side. A helical membrane pass occupies residues Val738–Ile758. Over Trp759–Met786 the chain is Lumenal. Residues Ala787–Ile807 form a helical membrane-spanning segment. Residues Ser808–Gly828 are Cytoplasmic-facing. The chain crosses the membrane as a helical span at residues Ala829–Leu849. At Asn850–Ala859 the chain is on the lumenal side. A helical membrane pass occupies residues Leu860–Val880. Residues Asp881 to Gly900 lie on the Cytoplasmic side of the membrane. A helical transmembrane segment spans residues Leu901–Ile921. The Lumenal segment spans residues Ala922–Met932.

This sequence belongs to the PIGG/PIGN/PIGO family. PIGN subfamily.

It is found in the endoplasmic reticulum membrane. It functions in the pathway glycolipid biosynthesis; glycosylphosphatidylinositol-anchor biosynthesis. Its function is as follows. Ethanolamine phosphate transferase involved in glycosylphosphatidylinositol-anchor biosynthesis. Transfers ethanolamine phosphate to the first alpha-1,4-linked mannose of the glycosylphosphatidylinositol precursor of GPI-anchor. The polypeptide is GPI ethanolamine phosphate transferase 1 (MCD4) (Yarrowia lipolytica (strain CLIB 122 / E 150) (Yeast)).